The following is a 660-amino-acid chain: Zinc transporter ZIP4 (660 aa).

Residues 1 to 22 (MLPKSVTQGLVLALLVGTVAVA) form the signal peptide. Over 23–337 (RPRNLLSLLA…QDQLSQTERY (315 aa)) the chain is Extracellular. 3 cysteine pairs are disulfide-bonded: Cys-56/Cys-61, Cys-64/Cys-110, and Cys-160/Cys-195. 2 N-linked (GlcNAc...) asparagine glycosylation sites follow: Asn-192 and Asn-219. The interval 233–273 (GVGGEDHSDHDDHGDHADHSHPDRKASHQDSELHTPHNSNS) is disordered. Over residues 236–267 (GEDHSDHDDHGDHADHSHPDRKASHQDSELHT) the composition is skewed to basic and acidic residues. N-linked (GlcNAc...) asparagine glycosylation is present at Asn-272. The cysteines at positions 280 and 319 are disulfide-linked. The chain crosses the membrane as a helical span at residues 338 to 358 (LYGSLATLLICLCAVFGLLLL). The Cytoplasmic portion of the chain corresponds to 359–376 (TCAKCSTATHYIMQTFLS). A helical membrane pass occupies residues 377-397 (LAVGALTGDALLHLIPKVLGL). At 398-420 (HTHGGEGHTHEEEVGVGGQATWR) the chain is on the extracellular side. A helical membrane pass occupies residues 421–441 (LLAVLGGFYIFFLFESFFNLL). The Cytoplasmic portion of the chain corresponds to 442-511 (LPRDQDSEKD…LRAELRLLPY (70 aa)). The short motif at 465–467 (LQL) is the Essential for SLC39A4 endocytosis element. Residues 512 to 531 (LITLGDAVHNFADGLAVGAA) traverse the membrane as a helical segment. Zn(2+) is bound by residues His-520, Asn-521, and Asp-524. Residues 532–539 (FSSSWKTG) are Extracellular-facing. A helical membrane pass occupies residues 540-566 (LATSLAVFCHELPHELGDFAALLHAGL). Positions 549, 550, and 553 each coordinate Zn(2+). Residues 567–571 (SVKRA) are Cytoplasmic-facing. A helical transmembrane segment spans residues 572 to 592 (LLLNLASALTAFAGLYVALAV). Residues 593 to 599 (GVGEEGE) are Extracellular-facing. A helical membrane pass occupies residues 600–620 (AWILAVATGLFLYVALCDMLP). The Cytoplasmic portion of the chain corresponds to 621–630 (AMMNVRDQRP). Residues 631–651 (WLLFLLHNVGLLGGWTVLLLL) traverse the membrane as a helical segment. Residues 652-660 (SLYEDNITF) are Extracellular-facing. The N-linked (GlcNAc...) asparagine glycan is linked to Asn-657.

Belongs to the ZIP transporter (TC 2.A.5) family. As to quaternary structure, homodimer. Homodimerization is mediated by the transmembrane domain. The extracellular N-terminal ectodomain is cleaved when cells are Zn(2+) deficient, N-terminally cleaved SLC39A4 is then internalized faster. In terms of processing, under excess Zn(2+) conditions, SLC39A4 on the cell surface is rapidly endocytosed, ubiquitinated, and degraded. Post-translationally, N-glycosylated. In terms of tissue distribution, highly expressed in the small intestine and embryonic visceral yolk sac. Weakly expressed in the stomach and liver.

The protein localises to the cell membrane. It is found in the recycling endosome membrane. It localises to the apical cell membrane. It catalyses the reaction Zn(2+)(in) = Zn(2+)(out). In terms of biological role, selective transporter that mediates the uptake of Zn(2+). Plays an essential role for dietary zinc uptake from small intestine. The Zn(2+) uniporter activity is regulated by zinc availability. Also exhibits polyspecific binding and transport of Cu(2+), Cd(2+) and possibly Ni(2+) but at higher concentrations. This chain is Zinc transporter ZIP4 (Slc39a4), found in Mus musculus (Mouse).